Here is a 133-residue protein sequence, read N- to C-terminus: Napin-1 (133 aa).

2 propeptides span residues 31-49 (PSWT…EKQG) and 131-133 (PSY).

This sequence belongs to the 2S seed storage albumins family. In terms of assembly, the mature protein consists of a small and a large chain linked by disulfide bonds. As to expression, cotyledons and the axis.

In terms of biological role, the small, basic, water-soluble napins are one of the two major kinds of storage proteins synthesized in the seed during its maturation. The sequence is that of Napin-1 from Brassica napus (Rape).